The sequence spans 196 residues: DnaA initiator-associating protein DiaA (196 aa).

One can recognise an SIS domain in the interval 34 to 196 (LVQSLLNGNK…DNTLFPHQAD (163 aa)).

Belongs to the SIS family. DiaA subfamily. In terms of assembly, homotetramer; dimer of dimers.

Functionally, required for the timely initiation of chromosomal replication via direct interactions with the DnaA initiator protein. This is DnaA initiator-associating protein DiaA from Edwardsiella ictaluri (strain 93-146).